The following is a 360-amino-acid chain: NAD(P)H-quinone oxidoreductase subunit 1, chloroplastic (360 aa).

9 helical membrane-spanning segments follow: residues 27-47, 98-118, 129-149, 165-185, 203-223, 248-268, 269-289, 297-317, and 340-360; these read IWIF…VLVI, FSIG…VIPF, IGIF…LMSG, AAQS…ISLL, FWGW…ISSL, YSGI…LISS, LFVT…ISIL, IFGT…FLFI, and FLLP…LFSL.

The protein belongs to the complex I subunit 1 family. In terms of assembly, NDH is composed of at least 16 different subunits, 5 of which are encoded in the nucleus.

It localises to the plastid. It is found in the chloroplast thylakoid membrane. The enzyme catalyses a plastoquinone + NADH + (n+1) H(+)(in) = a plastoquinol + NAD(+) + n H(+)(out). It carries out the reaction a plastoquinone + NADPH + (n+1) H(+)(in) = a plastoquinol + NADP(+) + n H(+)(out). Functionally, NDH shuttles electrons from NAD(P)H:plastoquinone, via FMN and iron-sulfur (Fe-S) centers, to quinones in the photosynthetic chain and possibly in a chloroplast respiratory chain. The immediate electron acceptor for the enzyme in this species is believed to be plastoquinone. Couples the redox reaction to proton translocation, and thus conserves the redox energy in a proton gradient. This chain is NAD(P)H-quinone oxidoreductase subunit 1, chloroplastic, found in Barbarea verna (Land cress).